A 369-amino-acid polypeptide reads, in one-letter code: MSLPIEQYPELLAQKVDNLTALLAPFNPPPFDIFASETSHFRMRAEFRVWHQKNEQGENDLYHIMFDPTTKQRYRVDQLPIANQLINTMMQKLLTQIQGIPVLTHKLFQVDYLTTLSGEIAISLLYHKKLTDEWLAQAKLLKQRLSEPGLTVHIIGRASKQKIAIDCDYVKEKLNVAGKTLIYRQVENSFTQPNAKMNINMLEWAQKCTANSQDSDLLELYCGNGNFSIALAGNFRKVLATEICKSSVHSAQYNIAQNGIDNLQIIRMSAEEFTQAINGVRQFNRLQGIDLSAYQCNTIFVDPPRAGLDQATLNMVQNYPRILYISCNPATLADNLRQLTTTHRIERVALFDQFPYTHHIESGVWLIRK.

5 residues coordinate S-adenosyl-L-methionine: Gln192, Tyr221, Asn226, Glu242, and Asp302. The Nucleophile role is filled by Cys327. The active-site Proton acceptor is the Glu361.

This sequence belongs to the class I-like SAM-binding methyltransferase superfamily. RNA M5U methyltransferase family. TrmA subfamily.

The enzyme catalyses uridine(54) in tRNA + S-adenosyl-L-methionine = 5-methyluridine(54) in tRNA + S-adenosyl-L-homocysteine + H(+). The catalysed reaction is uridine(341) in tmRNA + S-adenosyl-L-methionine = 5-methyluridine(341) in tmRNA + S-adenosyl-L-homocysteine + H(+). Its function is as follows. Dual-specificity methyltransferase that catalyzes the formation of 5-methyluridine at position 54 (m5U54) in all tRNAs, and that of position 341 (m5U341) in tmRNA (transfer-mRNA). In Haemophilus ducreyi (strain 35000HP / ATCC 700724), this protein is tRNA/tmRNA (uracil-C(5))-methyltransferase.